A 629-amino-acid chain; its full sequence is Citrate (Re)-synthase (629 aa).

In terms of domain architecture, Pyruvate carboxyltransferase spans 59 to 329; the sequence is IFITDTTFRD…TNGIDTTVIT (271 aa). The Cache domain occupies 497–601; it reads VMQRFIEEYP…GVDIRVEDLV (105 aa).

This sequence belongs to the alpha-IPM synthase/homocitrate synthase family. As to quaternary structure, homotetramer. Co(2+) serves as cofactor. Mn(2+) is required as a cofactor.

It catalyses the reaction oxaloacetate + acetyl-CoA + H2O = citrate + CoA + H(+). Inhibited by p-hydroxymercuribenzoate and EDTA. Its function is as follows. Catalyzes the condensation of the acetyl group of acetyl-CoA with oxaloacetate to form citrate. This Syntrophus aciditrophicus (strain SB) protein is Citrate (Re)-synthase.